The primary structure comprises 443 residues: Ribosomal protein uS12 methylthiotransferase RimO (443 aa).

The MTTase N-terminal domain maps to 5–115 (PNIGFISLGC…VMKHVHKYVP (111 aa)). Residues cysteine 14, cysteine 50, cysteine 79, cysteine 147, cysteine 151, and cysteine 154 each coordinate [4Fe-4S] cluster. The Radical SAM core domain occupies 133–374 (LTPKHYAYLK…MQVQQRISAA (242 aa)). Residues 377-443 (QQKVGKTLAV…ADEYDLWGTC (67 aa)) enclose the TRAM domain.

The protein belongs to the methylthiotransferase family. RimO subfamily. Requires [4Fe-4S] cluster as cofactor.

Its subcellular location is the cytoplasm. The catalysed reaction is L-aspartate(89)-[ribosomal protein uS12]-hydrogen + (sulfur carrier)-SH + AH2 + 2 S-adenosyl-L-methionine = 3-methylsulfanyl-L-aspartate(89)-[ribosomal protein uS12]-hydrogen + (sulfur carrier)-H + 5'-deoxyadenosine + L-methionine + A + S-adenosyl-L-homocysteine + 2 H(+). Functionally, catalyzes the methylthiolation of an aspartic acid residue of ribosomal protein uS12. The sequence is that of Ribosomal protein uS12 methylthiotransferase RimO from Actinobacillus pleuropneumoniae serotype 5b (strain L20).